We begin with the raw amino-acid sequence, 154 residues long: Ribonuclease H (154 aa).

One can recognise an RNase H type-1 domain in the interval 5-146; that stretch reads EQNIVYLYCD…ADELANRGID (142 aa). Mg(2+) is bound by residues Asp-14, Glu-52, Asp-74, and Asp-138.

Belongs to the RNase H family. In terms of assembly, monomer. The cofactor is Mg(2+).

It localises to the cytoplasm. The catalysed reaction is Endonucleolytic cleavage to 5'-phosphomonoester.. Functionally, endonuclease that specifically degrades the RNA of RNA-DNA hybrids. The sequence is that of Ribonuclease H from Coxiella burnetii (strain RSA 331 / Henzerling II).